The primary structure comprises 537 residues: Probable feruloyl esterase ARB_07085 (537 aa).

The signal sequence occupies residues 1–22 (MVTLPLLLSILPLAAVFSSAAS). N-linked (GlcNAc...) asparagine glycosylation is found at asparagine 67, asparagine 76, and asparagine 189. Cystine bridges form between cysteine 196-cysteine 459, cysteine 263-cysteine 280, and cysteine 508-cysteine 529. Residue serine 197 is the Acyl-ester intermediate of the active site. Ca(2+)-binding residues include aspartate 264, aspartate 267, valine 269, aspartate 271, and valine 273. Asparagine 339 is a glycosylation site (N-linked (GlcNAc...) asparagine). Active-site charge relay system residues include aspartate 419 and histidine 458.

This sequence belongs to the tannase family.

The protein localises to the secreted. The catalysed reaction is feruloyl-polysaccharide + H2O = ferulate + polysaccharide.. In terms of biological role, hydrolyzes the feruloyl-arabinose ester bond in arabinoxylans as well as the feruloyl-galactose and feruloyl-arabinose ester bonds. This Arthroderma benhamiae (strain ATCC MYA-4681 / CBS 112371) (Trichophyton mentagrophytes) protein is Probable feruloyl esterase ARB_07085.